A 258-amino-acid chain; its full sequence is Hemin import ATP-binding protein HmuV (258 aa).

Positions Leu-2–Pro-242 constitute an ABC transporter domain. Position 34–41 (Gly-34–Ser-41) interacts with ATP.

It belongs to the ABC transporter superfamily. Heme (hemin) importer (TC 3.A.1.14.5) family. The complex is composed of two ATP-binding proteins (HmuV), two transmembrane proteins (HmuU) and a solute-binding protein (HmuT).

The protein resides in the cell inner membrane. In terms of biological role, part of the ABC transporter complex HmuTUV involved in hemin import. Responsible for energy coupling to the transport system. This chain is Hemin import ATP-binding protein HmuV, found in Hydrogenovibrio crunogenus (strain DSM 25203 / XCL-2) (Thiomicrospira crunogena).